A 269-amino-acid chain; its full sequence is Formamidopyrimidine-DNA glycosylase (269 aa).

P2 serves as the catalytic Schiff-base intermediate with DNA. The active-site Proton donor is E3. K58 functions as the Proton donor; for beta-elimination activity in the catalytic mechanism. The DNA site is built by H91, R110, and K150. The segment at 235 to 269 adopts an FPG-type zinc-finger fold; sequence SVYGCENKTCHFCKSKIIKIVQNQRSTFYCRKCQT. R259 (proton donor; for delta-elimination activity) is an active-site residue.

This sequence belongs to the FPG family. As to quaternary structure, monomer. It depends on Zn(2+) as a cofactor.

It carries out the reaction Hydrolysis of DNA containing ring-opened 7-methylguanine residues, releasing 2,6-diamino-4-hydroxy-5-(N-methyl)formamidopyrimidine.. The catalysed reaction is 2'-deoxyribonucleotide-(2'-deoxyribose 5'-phosphate)-2'-deoxyribonucleotide-DNA = a 3'-end 2'-deoxyribonucleotide-(2,3-dehydro-2,3-deoxyribose 5'-phosphate)-DNA + a 5'-end 5'-phospho-2'-deoxyribonucleoside-DNA + H(+). Its function is as follows. Involved in base excision repair of DNA damaged by oxidation or by mutagenic agents. Acts as a DNA glycosylase that recognizes and removes damaged bases. Has a preference for oxidized purines, such as 7,8-dihydro-8-oxoguanine (8-oxoG). Has AP (apurinic/apyrimidinic) lyase activity and introduces nicks in the DNA strand. Cleaves the DNA backbone by beta-delta elimination to generate a single-strand break at the site of the removed base with both 3'- and 5'-phosphates. This is Formamidopyrimidine-DNA glycosylase from Ruthia magnifica subsp. Calyptogena magnifica.